A 506-amino-acid chain; its full sequence is RNA-splicing ligase RtcB homolog 1 (506 aa).

Residues D120, C123, H228, H260, and H354 each contribute to the Mn(2+) site. 227 to 231 serves as a coordination point for GMP; sequence NHYAE. Residues 354 to 355, 403 to 406, S410, 429 to 432, and K505 contribute to the GMP site; these read HN, GGSM, and HGAG. H429 functions as the GMP-histidine intermediate in the catalytic mechanism.

The protein belongs to the RtcB family. As to quaternary structure, catalytic component of the tRNA-splicing ligase complex. It depends on Mn(2+) as a cofactor.

The enzyme catalyses a 3'-end 3'-phospho-ribonucleotide-RNA + a 5'-end dephospho-ribonucleoside-RNA + GTP = a ribonucleotidyl-ribonucleotide-RNA + GMP + diphosphate. The catalysed reaction is a 3'-end 2',3'-cyclophospho-ribonucleotide-RNA + a 5'-end dephospho-ribonucleoside-RNA + GTP + H2O = a ribonucleotidyl-ribonucleotide-RNA + GMP + diphosphate + H(+). In terms of biological role, catalytic subunit of the tRNA-splicing ligase complex that acts by directly joining spliced tRNA halves to mature-sized tRNAs by incorporating the precursor-derived splice junction phosphate into the mature tRNA as a canonical 3',5'-phosphodiester. May act as an RNA ligase with broad substrate specificity, and may function toward other RNAs. In Culex quinquefasciatus (Southern house mosquito), this protein is RNA-splicing ligase RtcB homolog 1.